The primary structure comprises 170 residues: MASVRIREAKEGDCGDILRLIRELAEFEKLSDQVKISEEALRADGFGDNPFYHCLVAEILPAPGKLLGPCVVGYGIYYFIYSTWKGRTIYLEDIYVMPEYRGQGIGSKIIKKVAEVALDKGCSQFRLAVLDWNQRAMDLYKALGAQDLTEAEGWHFFCFQGEATRKLAGK.

Positions 4–168 constitute an N-acetyltransferase domain; the sequence is VRIREAKEGD…FQGEATRKLA (165 aa). A substrate-binding site is contributed by 27-28; sequence FE. Lys29 is subject to N6-acetyllysine. Position 92 (Glu92) interacts with substrate. Acetyl-CoA contacts are provided by residues 94–96, 102–107, 133–135, and Tyr140; these read IYV, GQGIGS, and NQR. The Proton donor role is filled by Tyr140. Glu152 contributes to the substrate binding site.

This sequence belongs to the acetyltransferase family. Homodimer. As to expression, widely expressed. Under physiological conditions, SSAT2 is expressed at lower level that SSAT1 (SSAT). Many tissues express only SSAT1, several tissues express both SSAT1 and SSAT2, and bone, cervix, ovary and pineal gland expressed only SSAT2.

It is found in the cytoplasm. The enzyme catalyses S-(2-aminoethyl)-L-cysteine + acetyl-CoA = S-(2-acetamidoethyl)-L-cysteine + CoA + H(+). It catalyses the reaction an alkane-alpha,omega-diamine + acetyl-CoA = an N-acetylalkane-alpha,omega-diamine + CoA + H(+). Catalyzes the N-acetylation of the amino acid thialysine (S-(2-aminoethyl)-L-cysteine), a L-lysine analog with the 4-methylene group substituted with a sulfur. May also catalyze acetylation of polyamines, such as norspermidine, spermidine or spermine. However, ability to acetylate polyamines is weak, suggesting that it does not act as a diamine acetyltransferase in vivo. In Homo sapiens (Human), this protein is Thialysine N-epsilon-acetyltransferase.